The following is a 505-amino-acid chain: Beta-glucosidase 18 (505 aa).

The first 26 residues, 1 to 26, serve as a signal peptide directing secretion; the sequence is MAGGSKTRIHASLVSTLLLLLPLASA. An a beta-D-glucoside-binding site is contributed by glutamine 46. Asparagine 55 carries an N-linked (GlcNAc...) asparagine glycan. A beta-D-glucoside is bound by residues histidine 148 and 193–194; that span reads NE. The active-site Proton donor is the glutamate 194. Cysteine 213 and cysteine 220 are oxidised to a cystine. Tyrosine 337 lines the a beta-D-glucoside pocket. Cysteine 345 and cysteine 350 form a disulfide bridge. A beta-D-glucoside-binding positions include glutamate 408, tryptophan 457, 464-465, and phenylalanine 473; that span reads EW. Catalysis depends on glutamate 408, which acts as the Nucleophile.

The protein belongs to the glycosyl hydrolase 1 family. In terms of tissue distribution, expressed in roots, leaves, flowers and pollen.

It carries out the reaction Hydrolysis of terminal, non-reducing beta-D-glucosyl residues with release of beta-D-glucose.. Hydrolyzes glycosides and monolignol glucosides. Can hydrolyze para-nitrophenyl beta-D-glucopyranoside (pNPGlc) in vitro. Hydrolyzes para-nitrophenyl beta-D-fucopyranoside, para-nitrophenyl beta-D-galactopyranoside and para-nitrophenyl beta-D-xylopyranoside in vitro. Hydrolyzes the monolignol glucosides coniferin and syringin with high catalytic efficiencies. This chain is Beta-glucosidase 18, found in Oryza sativa subsp. japonica (Rice).